We begin with the raw amino-acid sequence, 210 residues long: Thiamine-phosphate synthase (210 aa).

Residues 43–47 and Asn75 each bind 4-amino-2-methyl-5-(diphosphooxymethyl)pyrimidine; that span reads QLREK. Mg(2+) contacts are provided by Asp76 and Asp95. Ser114 provides a ligand contact to 4-amino-2-methyl-5-(diphosphooxymethyl)pyrimidine. Residue 140-142 coordinates 2-[(2R,5Z)-2-carboxy-4-methylthiazol-5(2H)-ylidene]ethyl phosphate; the sequence is TST. Lys143 lines the 4-amino-2-methyl-5-(diphosphooxymethyl)pyrimidine pocket. Residues Gly170 and 190–191 contribute to the 2-[(2R,5Z)-2-carboxy-4-methylthiazol-5(2H)-ylidene]ethyl phosphate site; that span reads IS.

The protein belongs to the thiamine-phosphate synthase family. Requires Mg(2+) as cofactor.

It carries out the reaction 2-[(2R,5Z)-2-carboxy-4-methylthiazol-5(2H)-ylidene]ethyl phosphate + 4-amino-2-methyl-5-(diphosphooxymethyl)pyrimidine + 2 H(+) = thiamine phosphate + CO2 + diphosphate. The enzyme catalyses 2-(2-carboxy-4-methylthiazol-5-yl)ethyl phosphate + 4-amino-2-methyl-5-(diphosphooxymethyl)pyrimidine + 2 H(+) = thiamine phosphate + CO2 + diphosphate. It catalyses the reaction 4-methyl-5-(2-phosphooxyethyl)-thiazole + 4-amino-2-methyl-5-(diphosphooxymethyl)pyrimidine + H(+) = thiamine phosphate + diphosphate. It functions in the pathway cofactor biosynthesis; thiamine diphosphate biosynthesis; thiamine phosphate from 4-amino-2-methyl-5-diphosphomethylpyrimidine and 4-methyl-5-(2-phosphoethyl)-thiazole: step 1/1. Its function is as follows. Condenses 4-methyl-5-(beta-hydroxyethyl)thiazole monophosphate (THZ-P) and 2-methyl-4-amino-5-hydroxymethyl pyrimidine pyrophosphate (HMP-PP) to form thiamine monophosphate (TMP). The protein is Thiamine-phosphate synthase of Clostridioides difficile (strain 630) (Peptoclostridium difficile).